Consider the following 379-residue polypeptide: Protein trichome birefringence-like 36 (379 aa).

A helical; Signal-anchor for type II membrane protein transmembrane segment spans residues 8–24 (VLFLSLCLILGKVVLSQ). The GDS motif signature appears at 123-125 (GDS). Residues 353–367 (DCSHWCLPGVPDIWN) carry the DCXHWCLPGXXDXWN motif motif.

The protein belongs to the PC-esterase family. TBL subfamily.

Its subcellular location is the membrane. Functionally, may act as a bridging protein that binds pectin and other cell wall polysaccharides. Probably involved in maintaining esterification of pectins. May be involved in the specific O-acetylation of cell wall polymers. In Arabidopsis thaliana (Mouse-ear cress), this protein is Protein trichome birefringence-like 36 (TBL36).